A 251-amino-acid polypeptide reads, in one-letter code: 3-deoxy-manno-octulosonate cytidylyltransferase (251 aa).

It belongs to the KdsB family.

It is found in the cytoplasm. The enzyme catalyses 3-deoxy-alpha-D-manno-oct-2-ulosonate + CTP = CMP-3-deoxy-beta-D-manno-octulosonate + diphosphate. The protein operates within nucleotide-sugar biosynthesis; CMP-3-deoxy-D-manno-octulosonate biosynthesis; CMP-3-deoxy-D-manno-octulosonate from 3-deoxy-D-manno-octulosonate and CTP: step 1/1. Its pathway is bacterial outer membrane biogenesis; lipopolysaccharide biosynthesis. Its function is as follows. Activates KDO (a required 8-carbon sugar) for incorporation into bacterial lipopolysaccharide in Gram-negative bacteria. The chain is 3-deoxy-manno-octulosonate cytidylyltransferase from Vibrio vulnificus (strain CMCP6).